Here is a 319-residue protein sequence, read N- to C-terminus: Glutathione synthetase (319 aa).

The ATP-grasp domain occupies glutamate 125–glutamate 311. ATP is bound at residue phenylalanine 151–glycine 208. Mg(2+) contacts are provided by glutamate 282 and asparagine 284.

The protein belongs to the prokaryotic GSH synthase family. The cofactor is Mg(2+). Mn(2+) is required as a cofactor.

It carries out the reaction gamma-L-glutamyl-L-cysteine + glycine + ATP = glutathione + ADP + phosphate + H(+). It participates in sulfur metabolism; glutathione biosynthesis; glutathione from L-cysteine and L-glutamate: step 2/2. The polypeptide is Glutathione synthetase (Pseudomonas syringae pv. tomato (strain ATCC BAA-871 / DC3000)).